Consider the following 182-residue polypeptide: Nuclear cap-binding protein subunit 2 (182 aa).

MRNA-binding positions include Tyr-13, Tyr-35, 104–108 (RADLD), 115–119 (RQYGR), and 125–126 (QV). The RRM domain maps to 32-110 (NCVYVGNLSF…RIIRADLDHG (79 aa)). The tract at residues 114 to 182 (GRQYGRGASG…NPRYNRWKKN (69 aa)) is disordered. A compositionally biased stretch (basic and acidic residues) spans 126 to 136 (VRDEMREEFDP). The segment covering 145–175 (RQPTSSRQLANYSGISSAPLGSSLELQSNPR) has biased composition (polar residues).

It belongs to the RRM NCBP2 family. In terms of assembly, component of the nuclear cap-binding complex (CBC), a heterodimer composed of cbc1 and cbc2 that interacts with capped RNAs.

It localises to the cytoplasm. The protein resides in the perinuclear region. The protein localises to the nucleus. In terms of biological role, component of the CBC complex, which binds co-transcriptionally to the 5' cap of pre-mRNAs and is involved in maturation, export and degradation of nuclear mRNAs. This chain is Nuclear cap-binding protein subunit 2 (cbc2), found in Schizosaccharomyces pombe (strain 972 / ATCC 24843) (Fission yeast).